Consider the following 381-residue polypeptide: Testis-specific expressed protein 55 (381 aa).

2 disordered regions span residues 1-176 and 292-317; these read MDEP…SDPH and TTEY…QSSR. Basic and acidic residues-rich tracts occupy residues 8–24 and 65–103; these read SLNH…EKNN and RTSE…ERRT. A compositionally biased stretch (polar residues) spans 104-113; the sequence is SQPPNQQLPS. A compositionally biased stretch (basic and acidic residues) spans 114–125; sequence HSERKTSGKIDG. Residues 134–143 are compositionally biased toward acidic residues; that stretch reads TDQETSEFDD. 2 stretches are compositionally biased toward polar residues: residues 147–163 and 292–302; these read SAST…QEYN and TTEYTSDTTPV. A compositionally biased stretch (low complexity) spans 307–317; sequence RSSQRSSQSSR.

In terms of tissue distribution, testis-specific.

The protein resides in the nucleus. The sequence is that of Testis-specific expressed protein 55 from Mus musculus (Mouse).